The following is a 113-amino-acid chain: MTSDLSSKHCESCEGIGAALNSEQIKNLLPQLNTKWEVTEDNRIIKRAFSFKNFYETMAFVNAIAWIANIENHHPDLEVGYNYCHVHFMTHALNGLTHNDFICAAKIDKLLVD.

Belongs to the pterin-4-alpha-carbinolamine dehydratase family.

The enzyme catalyses (4aS,6R)-4a-hydroxy-L-erythro-5,6,7,8-tetrahydrobiopterin = (6R)-L-erythro-6,7-dihydrobiopterin + H2O. This chain is Putative pterin-4-alpha-carbinolamine dehydratase, found in Legionella pneumophila (strain Lens).